Here is a 217-residue protein sequence, read N- to C-terminus: Chorionic somatomammotropin hormone 1 (217 aa).

An N-terminal signal peptide occupies residues 1-26 (MAPGSRTSLLLAFALLCLPWLQEAGA). A Zn(2+)-binding site is contributed by histidine 44. Cysteine 79 and cysteine 191 are oxidised to a cystine. Glutamate 200 is a Zn(2+) binding site. An intrachain disulfide couples cysteine 208 to cysteine 215.

The protein belongs to the somatotropin/prolactin family. Can be found in a monomeric as well as dimeric form.

It is found in the secreted. Functionally, produced only during pregnancy and is involved in stimulating lactation, fetal growth and metabolism. Does not interact with GHR but only activates PRLR through zinc-induced dimerization. The chain is Chorionic somatomammotropin hormone 1 (CSH1) from Homo sapiens (Human).